We begin with the raw amino-acid sequence, 443 residues long: Ribosomal protein uS12 methylthiotransferase RimO (443 aa).

The MTTase N-terminal domain occupies 8-118 (PKVGFVSLGC…VVNAVHEVVP (111 aa)). [4Fe-4S] cluster is bound by residues cysteine 17, cysteine 53, cysteine 82, cysteine 151, cysteine 155, and cysteine 158. Residues 137–375 (LTPRHYAYLK…MAHQQAISTA (239 aa)) enclose the Radical SAM core domain. The 66-residue stretch at 378 to 443 (QLRIGKEIEV…DEYDMWAEPI (66 aa)) folds into the TRAM domain.

Belongs to the methylthiotransferase family. RimO subfamily. The cofactor is [4Fe-4S] cluster.

The protein resides in the cytoplasm. It catalyses the reaction L-aspartate(89)-[ribosomal protein uS12]-hydrogen + (sulfur carrier)-SH + AH2 + 2 S-adenosyl-L-methionine = 3-methylsulfanyl-L-aspartate(89)-[ribosomal protein uS12]-hydrogen + (sulfur carrier)-H + 5'-deoxyadenosine + L-methionine + A + S-adenosyl-L-homocysteine + 2 H(+). In terms of biological role, catalyzes the methylthiolation of an aspartic acid residue of ribosomal protein uS12. The polypeptide is Ribosomal protein uS12 methylthiotransferase RimO (Pseudomonas putida (strain GB-1)).